The sequence spans 199 residues: Small ribosomal subunit protein uS2 (199 aa).

This sequence belongs to the universal ribosomal protein uS2 family.

This Thermoplasma acidophilum (strain ATCC 25905 / DSM 1728 / JCM 9062 / NBRC 15155 / AMRC-C165) protein is Small ribosomal subunit protein uS2 (rps2).